Here is a 439-residue protein sequence, read N- to C-terminus: Coiled-coil domain-containing protein 166 (439 aa).

Residues 1 to 28 (MAPKKKRGPSAGSQPGGAAAAGAEQPLS) form a disordered region. Over residues 9-23 (PSAGSQPGGAAAAGA) the composition is skewed to low complexity. Coiled-coil stretches lie at residues 27–74 (LSER…EENR) and 121–213 (DGVR…VRAL). Residues 276 to 439 (PGGPPLWERP…AAAEASPGRA (164 aa)) are disordered. The segment covering 338–365 (VLSSMDSRVPSLATSKVGSRMPSLTASR) has biased composition (polar residues). 2 stretches are compositionally biased toward low complexity: residues 376-392 (SLEG…RVSS) and 428-439 (AEAAAEASPGRA).

This chain is Coiled-coil domain-containing protein 166 (CCDC166), found in Homo sapiens (Human).